A 251-amino-acid chain; its full sequence is Hydroxyacylglutathione hydrolase (251 aa).

Histidine 53, histidine 55, aspartate 57, histidine 58, histidine 110, aspartate 127, and histidine 165 together coordinate Zn(2+).

This sequence belongs to the metallo-beta-lactamase superfamily. Glyoxalase II family. In terms of assembly, monomer. It depends on Zn(2+) as a cofactor.

The catalysed reaction is an S-(2-hydroxyacyl)glutathione + H2O = a 2-hydroxy carboxylate + glutathione + H(+). It functions in the pathway secondary metabolite metabolism; methylglyoxal degradation; (R)-lactate from methylglyoxal: step 2/2. Functionally, thiolesterase that catalyzes the hydrolysis of S-D-lactoyl-glutathione to form glutathione and D-lactic acid. This Escherichia coli (strain 55989 / EAEC) protein is Hydroxyacylglutathione hydrolase.